A 584-amino-acid chain; its full sequence is Putative sel1-like repeat-containing protein L18 (584 aa).

Sel1-like repeat units lie at residues 132 to 167 (SMAQYNLGQMYYRGISTKKNIQKAIKWITKSADQNN), 168 to 203 (KYGLINLARFYEYGDGVLLDIDKATQLLEQASCQNF), 204 to 237 (SKAQFYLGRIYMYKDPPDYKLAFKYYQQAANQNH), 238 to 273 (SSAQYFIAVFYKTGKCVAQDYKKAVHWLTLAASQGL), 274 to 309 (NSAKIKLAEMYMKGIDVEQNYHKAFELLNSSIYDDG), and 316 to 351 (EVAMTELACMYKRGLGIEKNISKAIYLHIKSRNTKN).

In Acanthamoeba polyphaga (Amoeba), this protein is Putative sel1-like repeat-containing protein L18.